A 97-amino-acid chain; its full sequence is UPF0298 protein MGAS9429_Spy0329 (97 aa).

It belongs to the UPF0298 family.

Its subcellular location is the cytoplasm. The protein is UPF0298 protein MGAS9429_Spy0329 of Streptococcus pyogenes serotype M12 (strain MGAS9429).